Reading from the N-terminus, the 199-residue chain is Recombination protein RecR (199 aa).

Residues 57 to 72 (CQSCRTFTEQSLCPIC) form a C4-type zinc finger. Residues 81–176 (GVICVVETPA…IISRIAHGVP (96 aa)) enclose the Toprim domain.

It belongs to the RecR family.

In terms of biological role, may play a role in DNA repair. It seems to be involved in an RecBC-independent recombinational process of DNA repair. It may act with RecF and RecO. This chain is Recombination protein RecR, found in Shewanella denitrificans (strain OS217 / ATCC BAA-1090 / DSM 15013).